Reading from the N-terminus, the 358-residue chain is Electron transfer flavoprotein subunit alpha, mitochondrial (358 aa).

An FAD-binding site is contributed by 298–326 (LYMAFGVSGAIQHLAGMRDSKVIVAVNKD).

Belongs to the ETF alpha-subunit/FixB family. Heterodimer of an alpha and a beta subunit. Requires FAD as cofactor.

It is found in the mitochondrion matrix. Functionally, the electron transfer flavoprotein serves as a specific electron acceptor for several dehydrogenases, including five acyl-CoA dehydrogenases, glutaryl-CoA and sarcosine dehydrogenase. It transfers the electrons to the main mitochondrial respiratory chain via ETF-ubiquinone oxidoreductase (ETF dehydrogenase). The protein is Electron transfer flavoprotein subunit alpha, mitochondrial (ETFA) of Oryza sativa subsp. indica (Rice).